We begin with the raw amino-acid sequence, 327 residues long: GMP reductase (327 aa).

Cys-176 (thioimidate intermediate) is an active-site residue. An NADP(+)-binding site is contributed by 205-228 (IIADGGIRTHGDIAKSIRFGASMV).

It belongs to the IMPDH/GMPR family. GuaC type 2 subfamily.

The catalysed reaction is IMP + NH4(+) + NADP(+) = GMP + NADPH + 2 H(+). In terms of biological role, catalyzes the irreversible NADPH-dependent deamination of GMP to IMP. It functions in the conversion of nucleobase, nucleoside and nucleotide derivatives of G to A nucleotides, and in maintaining the intracellular balance of A and G nucleotides. This is GMP reductase from Streptococcus suis (strain 05ZYH33).